The sequence spans 127 residues: Aspartate 1-decarboxylase (127 aa).

S25 acts as the Schiff-base intermediate with substrate; via pyruvic acid in catalysis. Residue S25 is modified to Pyruvic acid (Ser). T57 contacts substrate. Y58 serves as the catalytic Proton donor. G73–A75 contacts substrate.

This sequence belongs to the PanD family. In terms of assembly, heterooctamer of four alpha and four beta subunits. The cofactor is pyruvate. Post-translationally, is synthesized initially as an inactive proenzyme, which is activated by self-cleavage at a specific serine bond to produce a beta-subunit with a hydroxyl group at its C-terminus and an alpha-subunit with a pyruvoyl group at its N-terminus.

The protein localises to the cytoplasm. The enzyme catalyses L-aspartate + H(+) = beta-alanine + CO2. It functions in the pathway cofactor biosynthesis; (R)-pantothenate biosynthesis; beta-alanine from L-aspartate: step 1/1. In terms of biological role, catalyzes the pyruvoyl-dependent decarboxylation of aspartate to produce beta-alanine. The chain is Aspartate 1-decarboxylase from Bacillus cytotoxicus (strain DSM 22905 / CIP 110041 / 391-98 / NVH 391-98).